Reading from the N-terminus, the 303-residue chain is Elongation factor Ts (303 aa).

An involved in Mg(2+) ion dislocation from EF-Tu region spans residues Thr79 to Thr82.

Belongs to the EF-Ts family.

The protein resides in the cytoplasm. Associates with the EF-Tu.GDP complex and induces the exchange of GDP to GTP. It remains bound to the aminoacyl-tRNA.EF-Tu.GTP complex up to the GTP hydrolysis stage on the ribosome. This Magnetococcus marinus (strain ATCC BAA-1437 / JCM 17883 / MC-1) protein is Elongation factor Ts.